The sequence spans 394 residues: Actin-related protein 2-A (394 aa).

Residues 160–162 (GDG), 214–218 (RMMKE), and 305–310 (GGSTMY) contribute to the ATP site.

Belongs to the actin family. ARP2 subfamily. In terms of assembly, component of the Arp2/3 complex composed of actr2/arp2, actr3/arp3, arpc1b, arpc2, arpc3, arpc4 and arpc5.

The protein localises to the cytoplasm. It is found in the cytoskeleton. It localises to the cell projection. The protein resides in the nucleus. Functionally, ATP-binding component of the Arp2/3 complex, a multiprotein complex that mediates actin polymerization upon stimulation by nucleation-promoting factor (NPF). The Arp2/3 complex mediates the formation of branched actin networks in the cytoplasm, providing the force for cell motility. Seems to contact the pointed end of the daughter actin filament. In addition to its role in the cytoplasmic cytoskeleton, the Arp2/3 complex also promotes actin polymerization in the nucleus, thereby regulating gene transcription and repair of damaged DNA. The Arp2/3 complex promotes homologous recombination (HR) repair in response to DNA damage by promoting nuclear actin polymerization, leading to drive motility of double-strand breaks (DSBs). In Danio rerio (Zebrafish), this protein is Actin-related protein 2-A (actr2a).